The primary structure comprises 420 residues: Serine hydroxymethyltransferase (420 aa).

Residues leucine 118 and 122–124 contribute to the (6S)-5,6,7,8-tetrahydrofolate site; that span reads GHL. Position 227 is an N6-(pyridoxal phosphate)lysine (lysine 227).

The protein belongs to the SHMT family. In terms of assembly, homodimer. The cofactor is pyridoxal 5'-phosphate.

It localises to the cytoplasm. The enzyme catalyses (6R)-5,10-methylene-5,6,7,8-tetrahydrofolate + glycine + H2O = (6S)-5,6,7,8-tetrahydrofolate + L-serine. It participates in one-carbon metabolism; tetrahydrofolate interconversion. Its pathway is amino-acid biosynthesis; glycine biosynthesis; glycine from L-serine: step 1/1. Its function is as follows. Catalyzes the reversible interconversion of serine and glycine with tetrahydrofolate (THF) serving as the one-carbon carrier. This reaction serves as the major source of one-carbon groups required for the biosynthesis of purines, thymidylate, methionine, and other important biomolecules. Also exhibits THF-independent aldolase activity toward beta-hydroxyamino acids, producing glycine and aldehydes, via a retro-aldol mechanism. The polypeptide is Serine hydroxymethyltransferase (Persephonella marina (strain DSM 14350 / EX-H1)).